The following is a 42-amino-acid chain: uncharacterized protein (42 aa).

A disordered region spans residues 1–42; that stretch reads MTTGKPQSFEKMRTPFPGRSKAKGPQSDIIPSAPPNTPVTEH. Residues 32 to 42 show a composition bias toward pro residues; it reads SAPPNTPVTEH.

This is an uncharacterized protein from Schizosaccharomyces pombe (strain 972 / ATCC 24843) (Fission yeast).